Here is a 158-residue protein sequence, read N- to C-terminus: NAD(P)H-quinone oxidoreductase subunit J, chloroplastic (158 aa).

It belongs to the complex I 30 kDa subunit family. NDH is composed of at least 16 different subunits, 5 of which are encoded in the nucleus.

The protein localises to the plastid. The protein resides in the chloroplast thylakoid membrane. The catalysed reaction is a plastoquinone + NADH + (n+1) H(+)(in) = a plastoquinol + NAD(+) + n H(+)(out). It carries out the reaction a plastoquinone + NADPH + (n+1) H(+)(in) = a plastoquinol + NADP(+) + n H(+)(out). Its function is as follows. NDH shuttles electrons from NAD(P)H:plastoquinone, via FMN and iron-sulfur (Fe-S) centers, to quinones in the photosynthetic chain and possibly in a chloroplast respiratory chain. The immediate electron acceptor for the enzyme in this species is believed to be plastoquinone. Couples the redox reaction to proton translocation, and thus conserves the redox energy in a proton gradient. The chain is NAD(P)H-quinone oxidoreductase subunit J, chloroplastic from Daucus carota (Wild carrot).